The primary structure comprises 66 residues: Large ribosomal subunit protein bL33c (66 aa).

This sequence belongs to the bacterial ribosomal protein bL33 family.

It is found in the plastid. Its subcellular location is the chloroplast. The chain is Large ribosomal subunit protein bL33c from Lotus japonicus (Lotus corniculatus var. japonicus).